The chain runs to 79 residues: Acyl carrier protein (79 aa).

Positions 2-77 (ENIEQRVKKI…QAIDYVNAHL (76 aa)) constitute a Carrier domain. O-(pantetheine 4'-phosphoryl)serine is present on Ser37.

This sequence belongs to the acyl carrier protein (ACP) family. Post-translationally, 4'-phosphopantetheine is transferred from CoA to a specific serine of apo-ACP by AcpS. This modification is essential for activity because fatty acids are bound in thioester linkage to the sulfhydryl of the prosthetic group.

It localises to the cytoplasm. The protein operates within lipid metabolism; fatty acid biosynthesis. In terms of biological role, carrier of the growing fatty acid chain in fatty acid biosynthesis. The protein is Acyl carrier protein of Azoarcus sp. (strain BH72).